Consider the following 845-residue polypeptide: MSFQKVDPAQIESVLSKLTLEEKISLLAGKNFWETQDYPEKGVPPVKTSDGPNGARGATFKGGVTAACFPASSLLAATWDLDAAKHIGEALADETRSKGARVLLAPTVCIHRHPLGGRNFESFSEDPFLAGKLAAQYIKGLQGNGVAATIKHYAANEQETCRFTVNEHITERALREIYLKPFEIAIKESNPLAVMTAYNIVNGTHADSNNFLLRDVLRGEWGWKGLVMSDWGGTNSTADALNAGLDLEMPGPTRWRKVDEVLAVVKSGAVLEETIDERARNVLELLAKLNCFENPTIPEEKAINRPEHQKLIRSVGSQGLVLLKNEGDVLPLRKEILTNKKVALLGFAREALIHGGGSASVNAHYRVTPEEGLRAALGDTVEFEYAKGAHTFRQLPLMSDNVVNLEGQPGWTLDFFADEEPNGEPGSSISSEQPSYIPLFVKESWGSVRASAHFTPTQSGKHYFGMSGLGRSKLLIDGEVIYEQKLNCPDSMGFLLGGVEEPEIQYSFEAGKTYAVEVVSVKPTSKGGLALLDGFIGFRLGFMTEEEHNRDLLSEAVDVAKRSDIAIVFTGHTPDWETEGQDQISFHLPSNGSQDRLVAAVGAANPNTVVVNCTGVAVAMPWLDKVKAVVQAWFPGQEAGNAIADVLTGAVNPSGRLPVSFPRAIEDAPAHGNFPGDYTDGKDNRRHLEVTYKEGVFVGYRHYDLSEANRAKVLFPFGYGLSYTTFTHANHKASATSRNTVEVAVDVTNVGTCAGADVVQVYAGAKLAVPENPVKELVGFAKVHLKPGETKTANITFEVRQLTHFTERSGKWELESGDYEISIGQSVRDITGKVEIGLEAQNYKP.

N-linked (GlcNAc...) asparagine glycosylation occurs at asparagine 202. Aspartate 230 is a catalytic residue. N-linked (GlcNAc...) asparagine glycosylation is present at asparagine 235. The PA14 domain occupies 406 to 557; that stretch reads EGQPGWTLDF…HNRDLLSEAV (152 aa). Residues asparagine 591, asparagine 612, and asparagine 794 are each glycosylated (N-linked (GlcNAc...) asparagine).

The protein belongs to the glycosyl hydrolase 3 family.

The enzyme catalyses Hydrolysis of terminal, non-reducing beta-D-glucosyl residues with release of beta-D-glucose.. The protein operates within glycan metabolism; cellulose degradation. Beta-glucosidases are one of a number of cellulolytic enzymes involved in the degradation of cellulosic biomass. Catalyzes the last step releasing glucose from the inhibitory cellobiose. The sequence is that of Beta-glucosidase B (bglB) from Emericella nidulans (strain FGSC A4 / ATCC 38163 / CBS 112.46 / NRRL 194 / M139) (Aspergillus nidulans).